The chain runs to 1026 residues: MRLPWELLVLQSFMLCLADDYTLHGPVFVQEPSHVMFPLDSEEKKVKLSCEVKGNPKPHIRWKLNGTDVDIGMDFRYSVVEGSLLINNPNKTQDSGTYQCIATNSFGTIVSREAKLQFAYLENFKTRTRSTVSVRRGQGMVLLCGPPPHSGELSYAWIFNEHPSYQDNRRFVSQETGNLYIAKVEKADVGNYTCVVTNTVTSHQVLGPPTPLILRNDGVMGEYEPKIEVQFPETVPAEKGSTVKLECFALGNPVPTILWRRADGKPIARKARRHKSSGILEIPNFQQEDAGSYECVAENSRGKNIAKGQVTFYAQPNWVQIINDIHVAMEESVFWECKANGRPKPTYRWLKNGDPLLTRERIQIEQGTLNITIVNLSDAGMYQCVAENKHGVIYASAELSVIAESPDFSRTLLKRVTLVKVGGEVVIECKPKASPRPVYTWRKGREILRENERITISEDGNLRIINVTKSDAGSYTCIATNHFGTASSTGNVVVKDPTKVMVPPSSMDVTVGESIVLPCQVTHDHSLDIVFTWTFNGHLIDFDKDGDHFERVGGQDSAGDLMIRNIQLKHAGKYVCMVQTSVDKLSAAADLIVRGPPGPPEAVTIDEITDTTAQLSWRPGPDNHSPITMYVIQARTPFSVGWQAVSTVPELVDGKTFTATVVGLNPWVEYEFRTVAANVIGIGEPSRPSEKRRTEEALPEVTPANVSGGGGSKSELVITWETVPEELQNGRGFGYVVAFRPHGKMIWMLTVLASADASRYVFRNESVRPFSPFEVKVGVFNNKGEGPFSPTTLVYSAEEEPTKPPASIFARSLSATDIEVFWASPIGKNRGRIQGYEVKYWRHDDKEENARKIRTVGNQTSTKITNLKGNALYHLSVKAYNSAGTGPSSAAVNVTTRKPPPSQPPGNIIWNSSDSKIILNWDQVKALDNESEVKGYKVLYRWNRQSSTSVIETNKTSVELSLPFDEDYIIEIKPFSDGGDGSSSEQIRIPKISNSYARGSGASTSNACTLSAISTIMISLTARSSL.

Residues 1-18 (MRLPWELLVLQSFMLCLA) form the signal peptide. Ig-like C2-type domains are found at residues 32-117 (PSHV…AKLQ), 122-206 (ENFK…HQVL), 225-311 (PKIE…GQVT), 316-400 (PNWV…AELS), 406-493 (PDFS…GNVV), and 497-586 (PTKV…DKLS). Intrachain disulfides connect C50–C100, C144–C194, C247–C295, C337–C384, C429–C477, and C519–C576. 3 N-linked (GlcNAc...) asparagine glycosylation sites follow: N65, N90, and N191. N370, N375, and N466 each carry an N-linked (GlcNAc...) asparagine glycan. 4 Fibronectin type-III domains span residues 599–697 (PPEA…TEEA), 702–799 (TPAN…SAEE), 804–899 (PPAS…TRKP), and 900–995 (PPSQ…ISNS). Residues 685 to 710 (PSRPSEKRRTEEALPEVTPANVSGGG) form a disordered region. Positions 687–696 (RPSEKRRTEE) are enriched in basic and acidic residues. N705, N764, N858, N893, N911, N929, and N954 each carry an N-linked (GlcNAc...) asparagine glycan. S1000 carries GPI-anchor amidated serine lipidation. Residues 1001 to 1026 (GASTSNACTLSAISTIMISLTARSSL) constitute a propeptide, removed in mature form.

This sequence belongs to the immunoglobulin superfamily. Contactin family. Interacts with PTPRG. In terms of tissue distribution, specifically expressed in the nervous system. Not expressed in heart, spleen, lung, liver, kidney or skeletal muscle. In the hippocampus, it is highly expressed in CA1 pyramidal cells and weakly expressed in other regions of the hippocampus.

It localises to the cell membrane. The protein resides in the secreted. In terms of biological role, contactins mediate cell surface interactions during nervous system development. Has some neurite outgrowth-promoting activity. May be involved in synaptogenesis. This Rattus norvegicus (Rat) protein is Contactin-4 (Cntn4).